Consider the following 282-residue polypeptide: NADPH-dependent 7-cyano-7-deazaguanine reductase (282 aa).

Substrate is bound at residue 88-90 (IES). 90–91 (SK) serves as a coordination point for NADPH. Cysteine 190 (thioimide intermediate) is an active-site residue. Aspartate 197 acts as the Proton donor in catalysis. 229–230 (HE) is a binding site for substrate. 258-259 (RG) contacts NADPH.

This sequence belongs to the GTP cyclohydrolase I family. QueF type 2 subfamily. In terms of assembly, homodimer.

The protein localises to the cytoplasm. It carries out the reaction 7-aminomethyl-7-carbaguanine + 2 NADP(+) = 7-cyano-7-deazaguanine + 2 NADPH + 3 H(+). It participates in tRNA modification; tRNA-queuosine biosynthesis. In terms of biological role, catalyzes the NADPH-dependent reduction of 7-cyano-7-deazaguanine (preQ0) to 7-aminomethyl-7-deazaguanine (preQ1). The polypeptide is NADPH-dependent 7-cyano-7-deazaguanine reductase (Salmonella paratyphi A (strain ATCC 9150 / SARB42)).